A 1558-amino-acid chain; its full sequence is ABC transporter NFT1 (1558 aa).

Over 1–29 the chain is Extracellular; the sequence is MIKNGTCPYWERDDLSECARREYIEFKFP. N-linked (GlcNAc...) asparagine glycosylation occurs at asparagine 4. A helical membrane pass occupies residues 30 to 50; that stretch reads LFILLTGMIYAFCKVFRAFYL. The Cytoplasmic segment spans residues 51–103; sequence RGKNHTNEAPEFEEQGNGNHEYARFSVLRLKSAWESRSFCNVNNRSTFDKFKK. Residues 104-124 form a helical membrane-spanning segment; it reads FIEGAFIVLQLTIHLYILSSM. Residues 125–130 are Extracellular-facing; that stretch reads PMDNKK. The helical transmembrane segment at 131-151 threads the bilayer; sequence FFHQGFLVQMFLWILLLVVIT. Residues 152 to 169 lie on the Cytoplasmic side of the membrane; the sequence is LRLISASQSFRWVLACKR. The chain crosses the membrane as a helical span at residues 170–190; it reads DLWAVSFYSYASLFTLSILPL. Topologically, residues 191–201 are extracellular; that stretch reads RSVFIGKIKDK. The chain crosses the membrane as a helical span at residues 202–222; that stretch reads IMVKYIISETFIDLALLLLLS. Over 223–302 the chain is Cytoplasmic; that stretch reads TSSIEGTRYS…SSKKGRLLPN (80 aa). The helical transmembrane segment at 303–323 threads the bilayer; sequence IICYFKAVFISQLFLAFVSSF. The region spanning 311–621 is the ABC transmembrane type-1 1 domain; that stretch reads FISQLFLAFV…IASTVSLLIQ (311 aa). Residues 324–351 are Extracellular-facing; it reads LNFVPSLLMPRILSYVNDPKSKSWNLVS. The helical transmembrane segment at 352 to 374 threads the bilayer; the sequence is LYVSSMLVSKIIATTCRGQGLFL. Topologically, residues 375 to 449 are cytoplasmic; that stretch reads GEKGTMQLRT…VMSIDAFKVS (75 aa). Residues 410–434 form a disordered region; the sequence is NASTSFEENPDSSEAEPRKKSSRKD. Positions 424-434 are enriched in basic and acidic residues; sequence AEPRKKSSRKD. A helical membrane pass occupies residues 450–470; that stretch reads EAMNTFYLACEAVFMTVTALM. Over 471–481 the chain is Extracellular; it reads ILYSLLGWSAF. A helical membrane pass occupies residues 482-504; the sequence is AGTFALLAMIPLNFWCATFYGNY. At 505–558 the chain is on the cytoplasmic side; that stretch reads QADQLILTDKRTSGISEALNSIRVIKLLAWENLFYQKIINVRDGEIRLLKKKAT. A helical transmembrane segment spans residues 559–579; that stretch reads IFFLNHLIWFFGPTLVSAITF. Residues 580–584 are Extracellular-facing; it reads SVFIK. Residues 585 to 605 traverse the membrane as a helical segment; sequence FQNQTLTPTIAFTALSLFAIL. At 606–953 the chain is on the cytoplasmic side; that stretch reads RTPMDQIAST…KFSAYKWLAD (348 aa). The ABC transporter 1 domain occupies 651–892; sequence FGFEDASMEW…NEFLRESINN (242 aa). 686–693 lines the ATP pocket; the sequence is GPTGSGKS. The segment covering 892-901 has biased composition (polar residues); that stretch reads NDSKNTTHNQ. Positions 892–926 are disordered; sequence NDSKNTTHNQIDLKRSTTSKKTKNGDPEGGNSQDE. Residues 954–974 traverse the membrane as a helical segment; it reads YFGGLGVVFVFTSSSILIHGI. Positions 961 to 1251 constitute an ABC transmembrane type-1 2 domain; sequence VFVFTSSSIL…IIKVFSSVEL (291 aa). Residues 975–1013 are Extracellular-facing; the sequence is TLSQGFWLRYWLDTGSSGSKSTWLYRIVEGHSNIYFLLT. Residues 1014–1034 form a helical membrane-spanning segment; sequence YIIIGLVSSFLTSGKVWIAII. Residues 1035–1082 are Cytoplasmic-facing; sequence SGTNVTKKIFAKLLSSILYAKLRFHNVTPTGRIMNRFSKDMDIIDQQL. Residues 1083-1105 form a helical membrane-spanning segment; the sequence is IPNFEGLSYSVVVCLWIILLIGY. The Extracellular portion of the chain corresponds to 1106-1109; that stretch reads VTPQ. The helical transmembrane segment at 1110–1132 threads the bilayer; sequence FLLFAIPLCALYYTVCTLYLRAS. Residues 1133–1199 lie on the Cytoplasmic side of the membrane; it reads RELKRIDNIN…ATEWITYRVD (67 aa). Residues 1200 to 1220 traverse the membrane as a helical segment; it reads IIGTLVLFSSSVMIIMKASYL. Residues 1221-1222 lie on the Extracellular side of the membrane; the sequence is DA. Residues 1223 to 1243 form a helical membrane-spanning segment; it reads GLAGILLSNAFSFTETAQWII. The Cytoplasmic portion of the chain corresponds to 1244–1558; sequence KVFSSVELLM…LAKVSFDNKR (315 aa). An ABC transporter 2 domain is found at 1285–1538; the sequence is VELKNLSLRY…RNTIFYRLCR (254 aa). 1319 to 1326 serves as a coordination point for ATP; that stretch reads GRTGAGKS.

This sequence belongs to the ABC transporter superfamily. ABCC family. Conjugate transporter (TC 3.A.1.208) subfamily.

It is found in the membrane. This Saccharomyces cerevisiae (Baker's yeast) protein is ABC transporter NFT1 (NFT1).